The chain runs to 65 residues: Photosystem II reaction center protein J (65 aa).

Residues 35 to 55 traverse the membrane as a helical segment; it reads LWLVATAGGTAVIFVLGIFFY.

It belongs to the PsbJ family. As to quaternary structure, PSII is composed of 1 copy each of membrane proteins PsbA, PsbB, PsbC, PsbD, PsbE, PsbF, PsbH, PsbI, PsbJ, PsbK, PsbL, PsbM, PsbT, PsbX, PsbY, Psb30/Ycf12, peripheral proteins PsbO, CyanoQ (PsbQ), PsbU, PsbV and a large number of cofactors. It forms dimeric complexes.

The protein resides in the cellular thylakoid membrane. Functionally, one of the components of the core complex of photosystem II (PSII). PSII is a light-driven water:plastoquinone oxidoreductase that uses light energy to abstract electrons from H(2)O, generating O(2) and a proton gradient subsequently used for ATP formation. It consists of a core antenna complex that captures photons, and an electron transfer chain that converts photonic excitation into a charge separation. This chain is Photosystem II reaction center protein J, found in Prochlorococcus marinus (strain NATL2A).